The primary structure comprises 266 residues: Uridylate kinase (266 aa).

26-29 serves as a coordination point for ATP; that stretch reads KLGG. Gly67 serves as a coordination point for UMP. The ATP site is built by Gly68 and Arg72. Residues Asp87 and 148 to 155 contribute to the UMP site; that span reads LGAPYFST. ATP contacts are provided by Tyr181 and Asp184.

The protein belongs to the UMP kinase family. Homohexamer.

It localises to the cytoplasm. The catalysed reaction is UMP + ATP = UDP + ADP. The protein operates within pyrimidine metabolism; CTP biosynthesis via de novo pathway; UDP from UMP (UMPK route): step 1/1. With respect to regulation, inhibited by UTP. Its function is as follows. Catalyzes the reversible phosphorylation of UMP to UDP. This chain is Uridylate kinase, found in Acidothermus cellulolyticus (strain ATCC 43068 / DSM 8971 / 11B).